Reading from the N-terminus, the 448-residue chain is Cysteine--tRNA ligase (448 aa).

Residue C29 coordinates Zn(2+). Residues 31–41 carry the 'HIGH' region motif; the sequence is PTVYNYIHIGN. Residues C212, H237, and E241 each contribute to the Zn(2+) site. The 'KMSKS' region signature appears at 269–273; that stretch reads KMSKS. An ATP-binding site is contributed by K272.

This sequence belongs to the class-I aminoacyl-tRNA synthetase family. As to quaternary structure, monomer. It depends on Zn(2+) as a cofactor.

The protein localises to the cytoplasm. The enzyme catalyses tRNA(Cys) + L-cysteine + ATP = L-cysteinyl-tRNA(Cys) + AMP + diphosphate. The polypeptide is Cysteine--tRNA ligase (Streptococcus equi subsp. zooepidemicus (strain MGCS10565)).